The chain runs to 41 residues: uncharacterized protein (41 aa).

This is an uncharacterized protein from Saccharomyces cerevisiae (strain ATCC 204508 / S288c) (Baker's yeast).